The primary structure comprises 115 residues: Large ribosomal subunit protein eL36 (115 aa).

Belongs to the eukaryotic ribosomal protein eL36 family. Component of the large ribosomal subunit.

The protein localises to the cytoplasm. It is found in the cytosol. Functionally, component of the large ribosomal subunit. This Drosophila melanogaster (Fruit fly) protein is Large ribosomal subunit protein eL36 (RpL36).